We begin with the raw amino-acid sequence, 563 residues long: Membrane protein insertase YidC (563 aa).

The helical transmembrane segment at 6-26 (TVLWMIFSFSLLLLWNNWQIH) threads the bilayer. The segment at 36–70 (PAPEAAATQQPKADANGTAASSTASIPSSPAAAPA) is disordered. Positions 54–70 (AASSTASIPSSPAAAPA) are enriched in low complexity. The next 4 membrane-spanning stretches (helical) occupy residues 373-393 (WGWT…PLAA), 443-463 (LPMV…LASV), 482-502 (PFFI…KLNP), and 512-532 (VMMI…AGLV).

The protein belongs to the OXA1/ALB3/YidC family. Type 1 subfamily. In terms of assembly, interacts with the Sec translocase complex via SecD. Specifically interacts with transmembrane segments of nascent integral membrane proteins during membrane integration.

The protein localises to the cell membrane. In terms of biological role, required for the insertion and/or proper folding and/or complex formation of integral membrane proteins into the membrane. Involved in integration of membrane proteins that insert both dependently and independently of the Sec translocase complex, as well as at least some lipoproteins. Aids folding of multispanning membrane proteins. This chain is Membrane protein insertase YidC, found in Bordetella bronchiseptica (strain ATCC BAA-588 / NCTC 13252 / RB50) (Alcaligenes bronchisepticus).